The chain runs to 481 residues: MHWSFPEMIRLFSDEYRSSMLSEGNFGVERESQRVNYSGDLALTPHPSVFGDKFENPRITTDFSESQIEMITPPLKSAEEVYKALNDINNEVKNALKGELLWPLSMPPRLPKEEDIPVAQFPDTEDGRQKQIYRNGLALRYGKKMQMISGIHYNFSFSDKMIDFIYRQLRIEKTKRQFIDEMYFSLTRNFLRYHWILIYLFGASPICDSTYNSVIFKELEKIEKCCPHCAGKIKNFNRYATSLRVSRFGYSDTDEKKYTVYFNSLREYETKIKKMMETESNKYSKLGIYKDGVQIQLNGNLLQSESEFYAPIRFKRNIKKGETQLTALVNRGVEYIEIRILDVNPFDKVGISVEQMNFLQVFNVFCLFEESKSIDEEQMERINTNHQLAALLGRNEDLMLYKYNDDSRIPLKNFGDEIFEKLRIVAKLMDKDNVEKKYSESVESEYKKLHNIELLPSERICREMDNDNRSYIQFGMEYAEA.

It belongs to the glutamate--cysteine ligase type 1 family. Type 1 subfamily.

It carries out the reaction L-cysteine + L-glutamate + ATP = gamma-L-glutamyl-L-cysteine + ADP + phosphate + H(+). The protein operates within sulfur metabolism; glutathione biosynthesis; glutathione from L-cysteine and L-glutamate: step 1/2. This is Glutamate--cysteine ligase from Clostridium acetobutylicum (strain ATCC 824 / DSM 792 / JCM 1419 / IAM 19013 / LMG 5710 / NBRC 13948 / NRRL B-527 / VKM B-1787 / 2291 / W).